The primary structure comprises 795 residues: Phenylalanine--tRNA ligase beta subunit (795 aa).

Residues 39–148 (AGTFNGVKVG…IDAPIGMDFR (110 aa)) form the tRNA-binding domain. Positions 401–476 (PKPNKVALRR…RIYGYDNIPN (76 aa)) constitute a B5 domain. Mg(2+) is bound by residues Asp-454, Asp-460, Glu-463, and Glu-464. Positions 701–794 (SKFPANRRDI…VSEKFGASLR (94 aa)) constitute an FDX-ACB domain.

Belongs to the phenylalanyl-tRNA synthetase beta subunit family. Type 1 subfamily. In terms of assembly, tetramer of two alpha and two beta subunits. Requires Mg(2+) as cofactor.

It is found in the cytoplasm. The catalysed reaction is tRNA(Phe) + L-phenylalanine + ATP = L-phenylalanyl-tRNA(Phe) + AMP + diphosphate + H(+). The polypeptide is Phenylalanine--tRNA ligase beta subunit (Vibrio vulnificus (strain YJ016)).